Consider the following 271-residue polypeptide: uncharacterized protein (271 aa).

The protein belongs to the HAD-like hydrolase superfamily.

This is an uncharacterized protein from Staphylococcus aureus (strain Mu50 / ATCC 700699).